We begin with the raw amino-acid sequence, 441 residues long: Putative transporter AmpG 1 (441 aa).

12 helical membrane passes run 5–25, 42–62, 78–98, 104–124, 143–163, 171–191, 249–269, 297–317, 325–345, 352–372, 390–410, and 413–433; these read SHLLIIWLFGLISGFNLMITG, IGILSFITLPYSINFLLAPIF, LSWICLTSTALIFLIYIFSFL, LVLFTFTALIISFFSAAQDTI, GIYIFGYRIGMLLAGSGAIYL, EIYKIFAGLVFIYLILLIVAA, SGNDISLAYFIILILIFLVLY, VGKFWGVVGAIIGGLVGGFIM, SIFLFGIIHALGHILFIFLEI, LLFITIGIESITGGMTMTAYI, FLSSMMGISRSIFPIISGYMV, and FGWQNFFLFTTIITIPSLLIL.

This sequence belongs to the major facilitator superfamily.

The protein resides in the cell inner membrane. The chain is Putative transporter AmpG 1 (ampG1) from Rickettsia felis (strain ATCC VR-1525 / URRWXCal2) (Rickettsia azadi).